A 914-amino-acid chain; its full sequence is Protein translocase subunit SecA (914 aa).

Residues Gln-87, 105-109 (GEGKT), and Asp-508 each bind ATP. 4 residues coordinate Zn(2+): Cys-898, Cys-900, Cys-909, and His-910.

The protein belongs to the SecA family. In terms of assembly, monomer and homodimer. Part of the essential Sec protein translocation apparatus which comprises SecA, SecYEG and auxiliary proteins SecDF-YajC and YidC. The cofactor is Zn(2+).

It is found in the cell inner membrane. The protein resides in the cytoplasm. It catalyses the reaction ATP + H2O + cellular proteinSide 1 = ADP + phosphate + cellular proteinSide 2.. Functionally, part of the Sec protein translocase complex. Interacts with the SecYEG preprotein conducting channel. Has a central role in coupling the hydrolysis of ATP to the transfer of proteins into and across the cell membrane, serving both as a receptor for the preprotein-SecB complex and as an ATP-driven molecular motor driving the stepwise translocation of polypeptide chains across the membrane. In Xylella fastidiosa (strain M12), this protein is Protein translocase subunit SecA.